The chain runs to 365 residues: Putative agmatine deiminase (365 aa).

Residues Glu214 and Asp220 each contribute to the agmatine site. The active-site Amidino-cysteine intermediate is Cys357.

This sequence belongs to the agmatine deiminase family. As to quaternary structure, tetramer of two homodimers.

The enzyme catalyses agmatine + H2O = N-carbamoylputrescine + NH4(+). The polypeptide is Putative agmatine deiminase (Enterococcus faecalis (strain ATCC 700802 / V583)).